We begin with the raw amino-acid sequence, 53 residues long: uncharacterized protein (53 aa).

A helical membrane pass occupies residues 26-46; the sequence is CYLLFCFLECFLNLFKKCGVF.

This sequence belongs to the plectrovirus ORF11 family.

The protein resides in the host membrane. This is an uncharacterized protein from Spiroplasma virus SpV1-R8A2 B (SpV1).